A 111-amino-acid polypeptide reads, in one-letter code: uncharacterized protein (111 aa).

2 consecutive transmembrane segments (helical) span residues 27–47 (IIVL…GYKF) and 80–100 (IFTG…ISAI).

Its subcellular location is the membrane. This is an uncharacterized protein from Acanthamoeba polyphaga (Amoeba).